A 96-amino-acid polypeptide reads, in one-letter code: Redox-responsive transcriptional regulator WhiB3 (96 aa).

A 4Fe-4S Wbl-type domain is found at 22-86 (LCRGVDSSMF…GGLSESEREL (65 aa)). Cysteine 23, cysteine 53, cysteine 56, and cysteine 62 together coordinate [4Fe-4S] cluster.

This sequence belongs to the WhiB family. [4Fe-4S] cluster is required as a cofactor. Post-translationally, the Fe-S cluster can be nitrosylated by nitric oxide (NO). In terms of processing, upon Fe-S cluster removal intramolecular disulfide bonds are formed.

Its subcellular location is the cytoplasm. In terms of biological role, a redox-sensitive transcriptional regulator. Maintains intracellular redox homeostasis by regulating catabolic metabolism and polyketide biosynthesis. Regulates expression of the redox buffer ergothioneine (ERG). In concert with myothiol (MSH), another redox buffer, responds to low pH leading to acid resistance. The apo- but not holo-form probably binds DNA. In Mycolicibacterium smegmatis (strain ATCC 700084 / mc(2)155) (Mycobacterium smegmatis), this protein is Redox-responsive transcriptional regulator WhiB3 (whiB3).